A 120-amino-acid chain; its full sequence is Large ribosomal subunit protein uL18 (120 aa).

Belongs to the universal ribosomal protein uL18 family. As to quaternary structure, part of the 50S ribosomal subunit; part of the 5S rRNA/L5/L18/L25 subcomplex. Contacts the 5S and 23S rRNAs.

Functionally, this is one of the proteins that bind and probably mediate the attachment of the 5S RNA into the large ribosomal subunit, where it forms part of the central protuberance. This is Large ribosomal subunit protein uL18 from Bradyrhizobium sp. (strain ORS 278).